We begin with the raw amino-acid sequence, 59 residues long: Large ribosomal subunit protein uL30 (59 aa).

This sequence belongs to the universal ribosomal protein uL30 family. Part of the 50S ribosomal subunit.

The polypeptide is Large ribosomal subunit protein uL30 (Staphylococcus epidermidis (strain ATCC 12228 / FDA PCI 1200)).